A 452-amino-acid chain; its full sequence is Ribosomal protein uS12 methylthiotransferase RimO (452 aa).

An MTTase N-terminal domain is found at 3 to 118 (GKIGFVSLGC…VMQAIHLHLP (116 aa)). 6 residues coordinate [4Fe-4S] cluster: Cys-12, Cys-48, Cys-77, Cys-149, Cys-153, and Cys-156. The region spanning 135 to 381 (LTPKHYAYLK…MAKAEDISIK (247 aa)) is the Radical SAM core domain. One can recognise a TRAM domain in the interval 384 to 452 (AKKIGKRVQV…SQGHDLIAET (69 aa)).

This sequence belongs to the methylthiotransferase family. RimO subfamily. Requires [4Fe-4S] cluster as cofactor.

It localises to the cytoplasm. It carries out the reaction L-aspartate(89)-[ribosomal protein uS12]-hydrogen + (sulfur carrier)-SH + AH2 + 2 S-adenosyl-L-methionine = 3-methylsulfanyl-L-aspartate(89)-[ribosomal protein uS12]-hydrogen + (sulfur carrier)-H + 5'-deoxyadenosine + L-methionine + A + S-adenosyl-L-homocysteine + 2 H(+). Its function is as follows. Catalyzes the methylthiolation of an aspartic acid residue of ribosomal protein uS12. This Polynucleobacter asymbioticus (strain DSM 18221 / CIP 109841 / QLW-P1DMWA-1) (Polynucleobacter necessarius subsp. asymbioticus) protein is Ribosomal protein uS12 methylthiotransferase RimO.